The following is a 343-amino-acid chain: Probable dual-specificity RNA methyltransferase RlmN (343 aa).

Glu-91 serves as the catalytic Proton acceptor. In terms of domain architecture, Radical SAM core spans 97-326; that stretch reads HPDRITACIS…AEIRREKGAD (230 aa). A disulfide bridge connects residues Cys-104 and Cys-331. [4Fe-4S] cluster-binding residues include Cys-111, Cys-115, and Cys-118. Residues 158–159, Ser-190, 213–215, and Asn-289 contribute to the S-adenosyl-L-methionine site; these read GE and SLH. Cys-331 functions as the S-methylcysteine intermediate in the catalytic mechanism.

This sequence belongs to the radical SAM superfamily. RlmN family. Requires [4Fe-4S] cluster as cofactor.

It localises to the cytoplasm. It carries out the reaction adenosine(2503) in 23S rRNA + 2 reduced [2Fe-2S]-[ferredoxin] + 2 S-adenosyl-L-methionine = 2-methyladenosine(2503) in 23S rRNA + 5'-deoxyadenosine + L-methionine + 2 oxidized [2Fe-2S]-[ferredoxin] + S-adenosyl-L-homocysteine. It catalyses the reaction adenosine(37) in tRNA + 2 reduced [2Fe-2S]-[ferredoxin] + 2 S-adenosyl-L-methionine = 2-methyladenosine(37) in tRNA + 5'-deoxyadenosine + L-methionine + 2 oxidized [2Fe-2S]-[ferredoxin] + S-adenosyl-L-homocysteine. Specifically methylates position 2 of adenine 2503 in 23S rRNA and position 2 of adenine 37 in tRNAs. This Thermotoga petrophila (strain ATCC BAA-488 / DSM 13995 / JCM 10881 / RKU-1) protein is Probable dual-specificity RNA methyltransferase RlmN.